A 315-amino-acid chain; its full sequence is MIRIGTRGSLLATTQAGGVRDALIARGHPAELVTITTAGDRSSGPIESLGVGVFTTALREAIEEGRVDAAVHSHKDLPTADDPRFAVAAIPARNDPRDAVVARDGLVLGELPPGSLVGTSSPRRAAQLRALGLGLEIRPLRGNLDTRLNRVSSGDLDAIVVARAGLARLGRLGDVTETLEPVQMLPAPAQGALAVECRAGDSRLAAVLAELDDADTRASVTAERALLAELEAGCSAPVGAIAEVVESIDEDGRIFEELSLRGCVAALDGSDVIRASGIGTPGRARELGLSVAAELFELGARELMSGARHDPARGN.

Cys-234 is modified (S-(dipyrrolylmethanemethyl)cysteine).

The protein belongs to the HMBS family. Monomer. The cofactor is dipyrromethane.

The enzyme catalyses 4 porphobilinogen + H2O = hydroxymethylbilane + 4 NH4(+). It functions in the pathway porphyrin-containing compound metabolism; protoporphyrin-IX biosynthesis; coproporphyrinogen-III from 5-aminolevulinate: step 2/4. In terms of biological role, tetrapolymerization of the monopyrrole PBG into the hydroxymethylbilane pre-uroporphyrinogen in several discrete steps. This Mycobacterium avium (strain 104) protein is Porphobilinogen deaminase.